The primary structure comprises 96 residues: (4S)-4-hydroxy-5-phosphonooxypentane-2,3-dione isomerase (96 aa).

Positions 2–91 constitute an ABM domain; it reads HVTLVEINVK…MTGPRKKTVF (90 aa).

This sequence belongs to the LsrG family. As to quaternary structure, homodimer.

Its subcellular location is the cytoplasm. It catalyses the reaction (2S)-2-hydroxy-3,4-dioxopentyl phosphate = 3-hydroxy-2,4-dioxopentyl phosphate. Functionally, involved in the degradation of phospho-AI-2, thereby terminating induction of the lsr operon and closing the AI-2 signaling cycle. Catalyzes the conversion of (4S)-4-hydroxy-5-phosphonooxypentane-2,3-dione (P-DPD) to 3-hydroxy-5-phosphonooxypentane-2,4-dione (P-HPD). The polypeptide is (4S)-4-hydroxy-5-phosphonooxypentane-2,3-dione isomerase (Yersinia pseudotuberculosis serotype O:1b (strain IP 31758)).